Reading from the N-terminus, the 105-residue chain is ESAT-6-like protein EsxU (105 aa).

This sequence belongs to the WXG100 family. CFP-10 subfamily. As to quaternary structure, forms a tight 1:1 complex with EsxT. Complex formation results in induction of alpha-helical conformation and stability against chemical denaturation.

Its subcellular location is the secreted. This is ESAT-6-like protein EsxU from Mycobacterium tuberculosis (strain ATCC 25618 / H37Rv).